The following is a 198-amino-acid chain: MEHYISLFVRAVFVENMALAFFLGMCTFLAVSKKVSTAFGLGIAVTLVLGISVPVNNLVYNLILRDGALVEGVDLSFLNFITFIGVIAALVQILEMILDRFFPSLYNALGIFLPLITVNCAIFGGVSFMVQRDYNFAESVVYGFGSGTGWMLAIVAMAGIREKLKYANVPAGLRGLGITFITTGLMALGFMSFSGVQL.

Transmembrane regions (helical) follow at residues 11–31 (AVFV…FLAV), 35–55 (VSTA…SVPV), 77–97 (FLNF…LEMI), 110–130 (GIFL…SFMV), 140–160 (VVYG…MAGI), and 176–196 (LGIT…FSGV).

Belongs to the NqrDE/RnfAE family. As to quaternary structure, composed of six subunits; NqrA, NqrB, NqrC, NqrD, NqrE and NqrF.

It localises to the cell inner membrane. The enzyme catalyses a ubiquinone + n Na(+)(in) + NADH + H(+) = a ubiquinol + n Na(+)(out) + NAD(+). Functionally, NQR complex catalyzes the reduction of ubiquinone-1 to ubiquinol by two successive reactions, coupled with the transport of Na(+) ions from the cytoplasm to the periplasm. NqrA to NqrE are probably involved in the second step, the conversion of ubisemiquinone to ubiquinol. In Serratia proteamaculans (strain 568), this protein is Na(+)-translocating NADH-quinone reductase subunit E.